Reading from the N-terminus, the 552-residue chain is Chaperonin GroEL (552 aa).

ATP contacts are provided by residues 30-33 (TLGP), K51, 87-91 (DGTTT), G415, and D499.

It belongs to the chaperonin (HSP60) family. In terms of assembly, forms a cylinder of 14 subunits composed of two heptameric rings stacked back-to-back. Interacts with the co-chaperonin GroES.

It is found in the cytoplasm. It catalyses the reaction ATP + H2O + a folded polypeptide = ADP + phosphate + an unfolded polypeptide.. Functionally, together with its co-chaperonin GroES, plays an essential role in assisting protein folding. The GroEL-GroES system forms a nano-cage that allows encapsulation of the non-native substrate proteins and provides a physical environment optimized to promote and accelerate protein folding. In Hamiltonella defensa subsp. Acyrthosiphon pisum (strain 5AT), this protein is Chaperonin GroEL.